We begin with the raw amino-acid sequence, 394 residues long: S-adenosylmethionine synthase 3 (394 aa).

Glu11 lines the Mg(2+) pocket. His17 lines the ATP pocket. K(+) is bound at residue Glu45. Glu58 and Gln101 together coordinate L-methionine. Residues 169-171 (DGK), 237-240 (SGRF), Asp248, 254-255 (RK), Ala271, Lys275, and Lys279 contribute to the ATP site. An L-methionine-binding site is contributed by Asp248. An L-methionine-binding site is contributed by Lys279.

It belongs to the AdoMet synthase family. Homotetramer. It depends on Mn(2+) as a cofactor. Mg(2+) is required as a cofactor. Requires Co(2+) as cofactor. The cofactor is K(+).

It localises to the cytoplasm. It catalyses the reaction L-methionine + ATP + H2O = S-adenosyl-L-methionine + phosphate + diphosphate. It participates in amino-acid biosynthesis; S-adenosyl-L-methionine biosynthesis; S-adenosyl-L-methionine from L-methionine: step 1/1. Catalyzes the formation of S-adenosylmethionine from methionine and ATP. The reaction comprises two steps that are both catalyzed by the same enzyme: formation of S-adenosylmethionine (AdoMet) and triphosphate, and subsequent hydrolysis of the triphosphate. The sequence is that of S-adenosylmethionine synthase 3 (SAM3) from Hordeum vulgare (Barley).